The chain runs to 154 residues: Endoribonuclease YbeY (154 aa).

His-113, His-117, and His-123 together coordinate Zn(2+).

Belongs to the endoribonuclease YbeY family. Requires Zn(2+) as cofactor.

The protein resides in the cytoplasm. Its function is as follows. Single strand-specific metallo-endoribonuclease involved in late-stage 70S ribosome quality control and in maturation of the 3' terminus of the 16S rRNA. The sequence is that of Endoribonuclease YbeY from Ehrlichia chaffeensis (strain ATCC CRL-10679 / Arkansas).